A 114-amino-acid chain; its full sequence is Kininogen-2 (114 aa).

A signal peptide spans 1–23; it reads MRLWFCLSFFIVLCLEHFPGTLA. Positions 35–45 are enriched in basic residues; that stretch reads TRLHGHHKPSR. The segment at 35–114 is disordered; the sequence is TRLHGHHKPS…QIPGLGPLRG (80 aa). Residues 65 to 80 show a composition bias toward basic and acidic residues; that stretch reads PESEEKTEQFLRDLPK. The residue at position 113 (Arg-113) is an Arginine amide.

This sequence belongs to the bradykinin-related peptide family. Expressed by the skin glands.

It is found in the secreted. Its function is as follows. Potent vasodilator. Binds B1 (BDKRB1) and B2 (BDKRB2) bradykinin receptors. This is Kininogen-2 from Bombina maxima (Giant fire-bellied toad).